Here is a 98-residue protein sequence, read N- to C-terminus: Small ribosomal subunit protein eS24 (98 aa).

It belongs to the eukaryotic ribosomal protein eS24 family. Part of the 30S ribosomal subunit.

The polypeptide is Small ribosomal subunit protein eS24 (Thermococcus kodakarensis (strain ATCC BAA-918 / JCM 12380 / KOD1) (Pyrococcus kodakaraensis (strain KOD1))).